We begin with the raw amino-acid sequence, 33 residues long: Cytochrome b6-f complex subunit 8 (33 aa).

Residues Leu-2–Val-22 form a helical membrane-spanning segment.

Belongs to the PetN family. The 4 large subunits of the cytochrome b6-f complex are cytochrome b6, subunit IV (17 kDa polypeptide, PetD), cytochrome f and the Rieske protein, while the 4 small subunits are PetG, PetL, PetM and PetN. The complex functions as a dimer.

It is found in the cellular thylakoid membrane. In terms of biological role, component of the cytochrome b6-f complex, which mediates electron transfer between photosystem II (PSII) and photosystem I (PSI), cyclic electron flow around PSI, and state transitions. The chain is Cytochrome b6-f complex subunit 8 from Synechococcus sp. (strain WH7803).